We begin with the raw amino-acid sequence, 597 residues long: Elongation factor 4 (597 aa).

In terms of domain architecture, tr-type G spans 2–184 (QHIRNFSIIA…AIVARVPSPE (183 aa)). GTP is bound by residues 14 to 19 (DHGKST) and 131 to 134 (NKMD).

It belongs to the TRAFAC class translation factor GTPase superfamily. Classic translation factor GTPase family. LepA subfamily.

The protein resides in the cell inner membrane. The enzyme catalyses GTP + H2O = GDP + phosphate + H(+). Required for accurate and efficient protein synthesis under certain stress conditions. May act as a fidelity factor of the translation reaction, by catalyzing a one-codon backward translocation of tRNAs on improperly translocated ribosomes. Back-translocation proceeds from a post-translocation (POST) complex to a pre-translocation (PRE) complex, thus giving elongation factor G a second chance to translocate the tRNAs correctly. Binds to ribosomes in a GTP-dependent manner. In Bordetella avium (strain 197N), this protein is Elongation factor 4.